Consider the following 168-residue polypeptide: Ribosome maturation factor RimM (168 aa).

One can recognise a PRC barrel domain in the interval 95–168 (EEGYYWSDLI…RITVDWGLDY (74 aa)).

It belongs to the RimM family. As to quaternary structure, binds ribosomal protein uS19.

Its subcellular location is the cytoplasm. In terms of biological role, an accessory protein needed during the final step in the assembly of 30S ribosomal subunit, possibly for assembly of the head region. Essential for efficient processing of 16S rRNA. May be needed both before and after RbfA during the maturation of 16S rRNA. It has affinity for free ribosomal 30S subunits but not for 70S ribosomes. This Nitrosospira multiformis (strain ATCC 25196 / NCIMB 11849 / C 71) protein is Ribosome maturation factor RimM.